Here is a 495-residue protein sequence, read N- to C-terminus: UDP-N-acetylmuramoyl-L-alanyl-D-glutamate--2,6-diaminopimelate ligase (495 aa).

UDP-N-acetyl-alpha-D-muramoyl-L-alanyl-D-glutamate contacts are provided by residues Leu27, Ser29, and 44-46 (HQA). 116 to 122 (GTNGKTT) provides a ligand contact to ATP. UDP-N-acetyl-alpha-D-muramoyl-L-alanyl-D-glutamate contacts are provided by residues Asn157, 158–159 (TT), Ser185, Gln191, and Arg193. Position 225 is an N6-carboxylysine (Lys225). Residues Arg390, 414 to 417 (DNPR), Gly465, and Glu469 contribute to the meso-2,6-diaminopimelate site. Residues 414–417 (DNPR) carry the Meso-diaminopimelate recognition motif motif.

The protein belongs to the MurCDEF family. MurE subfamily. Requires Mg(2+) as cofactor. In terms of processing, carboxylation is probably crucial for Mg(2+) binding and, consequently, for the gamma-phosphate positioning of ATP.

The protein resides in the cytoplasm. It carries out the reaction UDP-N-acetyl-alpha-D-muramoyl-L-alanyl-D-glutamate + meso-2,6-diaminopimelate + ATP = UDP-N-acetyl-alpha-D-muramoyl-L-alanyl-gamma-D-glutamyl-meso-2,6-diaminopimelate + ADP + phosphate + H(+). The protein operates within cell wall biogenesis; peptidoglycan biosynthesis. In terms of biological role, catalyzes the addition of meso-diaminopimelic acid to the nucleotide precursor UDP-N-acetylmuramoyl-L-alanyl-D-glutamate (UMAG) in the biosynthesis of bacterial cell-wall peptidoglycan. This is UDP-N-acetylmuramoyl-L-alanyl-D-glutamate--2,6-diaminopimelate ligase from Escherichia coli O157:H7.